The sequence spans 365 residues: Chaperone protein DnaJ (365 aa).

The J domain maps to 4 to 70; that stretch reads DYYKILGVDR…QKRRMYDQTG (67 aa). Residues 139–220 form a CR-type zinc finger; sequence GTEKRIKYRR…CNGTGTVVVN (82 aa). Zn(2+) is bound by residues cysteine 152, cysteine 155, cysteine 168, cysteine 171, cysteine 194, cysteine 197, cysteine 208, and cysteine 211. CXXCXGXG motif repeat units follow at residues 152 to 159, 168 to 175, 194 to 201, and 208 to 215; these read CPDCNGTG, CPTCNGTG, CQTCGGRG, and CPRCNGTG.

It belongs to the DnaJ family. As to quaternary structure, homodimer. The cofactor is Zn(2+).

The protein localises to the cytoplasm. In terms of biological role, participates actively in the response to hyperosmotic and heat shock by preventing the aggregation of stress-denatured proteins and by disaggregating proteins, also in an autonomous, DnaK-independent fashion. Unfolded proteins bind initially to DnaJ; upon interaction with the DnaJ-bound protein, DnaK hydrolyzes its bound ATP, resulting in the formation of a stable complex. GrpE releases ADP from DnaK; ATP binding to DnaK triggers the release of the substrate protein, thus completing the reaction cycle. Several rounds of ATP-dependent interactions between DnaJ, DnaK and GrpE are required for fully efficient folding. Also involved, together with DnaK and GrpE, in the DNA replication of plasmids through activation of initiation proteins. The chain is Chaperone protein DnaJ from Thermoplasma acidophilum (strain ATCC 25905 / DSM 1728 / JCM 9062 / NBRC 15155 / AMRC-C165).